A 469-amino-acid polypeptide reads, in one-letter code: Phosphoglucosamine mutase (469 aa).

S117 functions as the Phosphoserine intermediate in the catalytic mechanism. Residues S117, D263, D265, and D267 each coordinate Mg(2+). S117 is modified (phosphoserine).

It belongs to the phosphohexose mutase family. Mg(2+) is required as a cofactor. Post-translationally, activated by phosphorylation.

The catalysed reaction is alpha-D-glucosamine 1-phosphate = D-glucosamine 6-phosphate. Catalyzes the conversion of glucosamine-6-phosphate to glucosamine-1-phosphate. The protein is Phosphoglucosamine mutase of Anaeromyxobacter sp. (strain Fw109-5).